Consider the following 59-residue polypeptide: Large ribosomal subunit protein uL30 (59 aa).

It belongs to the universal ribosomal protein uL30 family. In terms of assembly, part of the 50S ribosomal subunit.

The polypeptide is Large ribosomal subunit protein uL30 (Buchnera aphidicola subsp. Schizaphis graminum (strain Sg)).